Here is a 506-residue protein sequence, read N- to C-terminus: uncharacterized protein (506 aa).

282-289 (GIQGTGKS) provides a ligand contact to ATP.

The protein belongs to the AAA ATPase family. Highly divergent.

Its subcellular location is the plastid. It is found in the chloroplast. This is an uncharacterized protein from Guillardia theta (Cryptophyte).